The chain runs to 258 residues: uncharacterized protein (258 aa).

4 helical membrane-spanning segments follow: residues 33 to 53 (LFVI…VTTN), 59 to 79 (FDSW…IFVF), 88 to 108 (LLYL…FSFF), and 140 to 160 (IIAL…WLIQ). The disordered stretch occupies residues 237–258 (NNKINSELQPPSILNKNSKPIE). Residues 242–258 (SELQPPSILNKNSKPIE) show a composition bias toward polar residues.

The protein localises to the membrane. This is an uncharacterized protein from Dictyostelium discoideum (Social amoeba).